Reading from the N-terminus, the 584-residue chain is Major capsid protein (584 aa).

This sequence belongs to the NCLDV major capsid protein family.

It localises to the virion. In terms of biological role, major protein of the capsid. In Haptolina ericina (CeV01), this protein is Major capsid protein (MCP).